The primary structure comprises 461 residues: Fumarate hydratase class II (461 aa).

Residues 97 to 99, 127 to 130, 137 to 139, and threonine 185 each bind substrate; these read SGT, HPND, and SSN. Residue histidine 186 is the Proton donor/acceptor of the active site. The active site involves serine 316. Substrate-binding positions include serine 317 and 322 to 324; that span reads KVN.

Belongs to the class-II fumarase/aspartase family. Fumarase subfamily. As to quaternary structure, homotetramer.

The protein localises to the cytoplasm. It carries out the reaction (S)-malate = fumarate + H2O. It participates in carbohydrate metabolism; tricarboxylic acid cycle; (S)-malate from fumarate: step 1/1. Functionally, involved in the TCA cycle. Catalyzes the stereospecific interconversion of fumarate to L-malate. The polypeptide is Fumarate hydratase class II (Staphylococcus saprophyticus subsp. saprophyticus (strain ATCC 15305 / DSM 20229 / NCIMB 8711 / NCTC 7292 / S-41)).